We begin with the raw amino-acid sequence, 358 residues long: Heterogeneous nuclear ribonucleoprotein A2 homolog 2 (358 aa).

RRM domains lie at 9 to 92 and 100 to 179; these read RKLF…ESAK and KKLF…LSKQ. 2 disordered regions span residues 182-217 and 333-358; these read QDVQNTRNNRGGNFGFGDSRGGGNFGSGPGGNFRGG and YGGGNYGPGNGSGASGGGGYGGRNRY. A compositionally biased stretch (gly residues) spans 193–217; it reads GNFGFGDSRGGGNFGSGPGGNFRGG. The tract at residues 309 to 352 is nuclear targeting sequence; that stretch reads QQSSSYGPMKSGGNFGGNRSMGGPYGGGNYGPGNGSGASGGGGY.

It is found in the nucleus. Functionally, forms complexes (ribonucleosomes) with at least 20 other different hnRNP and heterogeneous nuclear RNA in the nucleus. This is Heterogeneous nuclear ribonucleoprotein A2 homolog 2 from Xenopus laevis (African clawed frog).